A 144-amino-acid polypeptide reads, in one-letter code: Large ribosomal subunit protein uL16 (144 aa).

The protein belongs to the universal ribosomal protein uL16 family. As to quaternary structure, part of the 50S ribosomal subunit.

Its function is as follows. Binds 23S rRNA and is also seen to make contacts with the A and possibly P site tRNAs. This is Large ribosomal subunit protein uL16 from Caldanaerobacter subterraneus subsp. tengcongensis (strain DSM 15242 / JCM 11007 / NBRC 100824 / MB4) (Thermoanaerobacter tengcongensis).